Reading from the N-terminus, the 834-residue chain is Periplasmic nitrate reductase (834 aa).

The tat-type signal signal peptide spans Met-1–Ala-31. In terms of domain architecture, 4Fe-4S Mo/W bis-MGD-type spans Ile-43 to Asp-99. [4Fe-4S] cluster is bound by residues Cys-50, Cys-53, Cys-57, and Cys-85. Mo-bis(molybdopterin guanine dinucleotide) is bound by residues Lys-87, Gln-154, Asn-179, Cys-183, Trp-216–Met-223, Ser-247–His-251, Gly-266–Asp-268, Met-377, Gln-381, Asn-487, Ser-513–Asp-514, Lys-536, Asp-563, and Thr-723–Ser-732. Trp-799 is a binding site for substrate. Positions 807 and 824 each coordinate Mo-bis(molybdopterin guanine dinucleotide).

Belongs to the prokaryotic molybdopterin-containing oxidoreductase family. NasA/NapA/NarB subfamily. Component of the periplasmic nitrate reductase NapAB complex composed of NapA and NapB. Requires [4Fe-4S] cluster as cofactor. It depends on Mo-bis(molybdopterin guanine dinucleotide) as a cofactor. Post-translationally, predicted to be exported by the Tat system. The position of the signal peptide cleavage has not been experimentally proven.

Its subcellular location is the periplasm. It carries out the reaction 2 Fe(II)-[cytochrome] + nitrate + 2 H(+) = 2 Fe(III)-[cytochrome] + nitrite + H2O. Catalytic subunit of the periplasmic nitrate reductase complex NapAB. Receives electrons from NapB and catalyzes the reduction of nitrate to nitrite. The sequence is that of Periplasmic nitrate reductase from Agrobacterium fabrum (strain C58 / ATCC 33970) (Agrobacterium tumefaciens (strain C58)).